A 665-amino-acid chain; its full sequence is Pentatricopeptide repeat-containing protein At1g04840 (665 aa).

PPR repeat units follow at residues 90-124, 125-155, 160-190, 195-229, 230-256, 257-291, 292-326, 327-357, 358-392, 393-423, and 429-459; these read NPFVLNALIRGLTENARFESSVRHFILMLRLGVKP, DRLTFPFVLKSNSKLGFRWLGRALHAATLKN, DSFVRLSLVDMYAKTGQLKHAFQVFEESPDR, SILIWNVLINGYCRAKDMHMATTLFRSMPERNSGS, WSTLIKGYVDSGELNRAKQLFELMPEK, NVVSWTTLINGFSQTGDYETAISTYFEMLEKGLKP, NEYTIAAVLSACSKSGALGSGIRIHGYILDNGIKL, DRAIGTALVDMYAKCGELDCAATVFSNMNHK, DILSWTAMIQGWAVHGRFHQAIQCFRQMMYSGEKP, DEVVFLAVLTACLNSSEVDLGLNFFDSMRLD, and TLKHYVLVVDLLGRAGKLNEAHELVENMPIN. The interval 464 to 539 is type E motif; that stretch reads TWAALYRACK…SLGWSYIELD (76 aa). The segment at 540 to 570 is type E(+) motif; it reads GQLNKFSAGDYSHKLTQEIGLKLDEIISLAI. The tract at residues 571 to 665 is type DYW motif; the sequence is QKGYNPGADW…DGRCSCGDYW (95 aa).

This sequence belongs to the PPR family. PCMP-H subfamily.

In Arabidopsis thaliana (Mouse-ear cress), this protein is Pentatricopeptide repeat-containing protein At1g04840 (PCMP-H64).